The primary structure comprises 187 residues: Ribosome-recycling factor (187 aa).

It belongs to the RRF family.

It is found in the cytoplasm. Its function is as follows. Responsible for the release of ribosomes from messenger RNA at the termination of protein biosynthesis. May increase the efficiency of translation by recycling ribosomes from one round of translation to another. This is Ribosome-recycling factor from Lactiplantibacillus plantarum (strain ATCC BAA-793 / NCIMB 8826 / WCFS1) (Lactobacillus plantarum).